We begin with the raw amino-acid sequence, 1455 residues long: Fanconi anemia group A protein (1455 aa).

Residues Arg18–Lys34 carry the Nuclear localization signal motif. Phosphoserine is present on Ser1449.

In terms of assembly, belongs to the multisubunit FA complex composed of FANCA, FANCB, FANCC, FANCE, FANCF, FANCG, FANCL/PHF9 and FANCM. The complex is not found in FA patients. In complex with FANCF, FANCG and FANCL, but not with FANCC, nor FANCE, interacts with HES1; this interaction may be essential for the stability and nuclear localization of FA core complex proteins. The complex with FANCC and FANCG may also include EIF2AK2 and HSP70. Interacts with FAAP20/C1orf86; interaction is direct. Phosphorylation is required for the formation of the nuclear complex. Not phosphorylated in cells derived from groups A, B, C, E, F, G, and H.

Its subcellular location is the nucleus. The protein resides in the cytoplasm. In terms of biological role, DNA repair protein that may operate in a postreplication repair or a cell cycle checkpoint function. May be involved in interstrand DNA cross-link repair and in the maintenance of normal chromosome stability. This Homo sapiens (Human) protein is Fanconi anemia group A protein (FANCA).